We begin with the raw amino-acid sequence, 688 residues long: Probable transcription factor gsfR1 (688 aa).

Acidic residues predominate over residues 1–16 (MSDGPETAEGDTDDAV). Positions 1–95 (MSDGPETAEG…TPVSSRGSIA (95 aa)) are disordered. Polar residues predominate over residues 24 to 36 (RVASESSARSQPR). A compositionally biased stretch (basic and acidic residues) spans 58 to 75 (EHSKEKNVSRRLPTEKTP).

Its subcellular location is the nucleus. Functionally, probable transcription factor that regulates expression of the gene cluster that mediates the biosynthesis of Griseofulvin, an important antifungal drug that has been in use for a long time for treating dermatophyte infections. The chain is Probable transcription factor gsfR1 from Penicillium aethiopicum.